Reading from the N-terminus, the 437-residue chain is Eukaryotic peptide chain release factor subunit 1 (437 aa).

An N-acetylalanine modification is found at Ala-2. The NIKS motif; plays an important role in translational termination motif lies at 61 to 64 (NIKS). 4-hydroxylysine is present on Lys-63. Lys-87 participates in a covalent cross-link: Glycyl lysine isopeptide (Lys-Gly) (interchain with G-Cter in SUMO2). Gln-185 is subject to N5-methylglutamine. Lys-279 is covalently cross-linked (Glycyl lysine isopeptide (Lys-Gly) (interchain with G-Cter in ubiquitin)). Position 347 is a phosphothreonine (Thr-347). Lys-404 participates in a covalent cross-link: Glycyl lysine isopeptide (Lys-Gly) (interchain with G-Cter in SUMO2).

Belongs to the eukaryotic release factor 1 family. Component of the eRF1-eRF3-GTP ternary complex, composed of ETF1/ERF1 and eRF3 (GSPT1/ERF3A or GSPT2/ERF3B) and GTP. Component of the transient SURF (SMG1-UPF1-eRF1-eRF3) complex. Interacts with JMJD4. The ETF1-GSPT1 complex interacts with JMJD4. In terms of processing, hydroxylation at Lys-63 by JMJD4 promotes its translational termination efficiency. Methylated at Gln-185 by N6AMT1. Post-translationally, ubiquitinated at Lys-279 via 'Lys-6'-linked polyubiquitin chains by RNF14 and RNF25 in response to ribosome collisions (ribosome stalling), leading to its degradation by the proteasome and rescue of stalled ribosomes.

The protein localises to the cytoplasm. In terms of biological role, component of the eRF1-eRF3-GTP ternary complex, a ternary complex that mediates translation termination in response to the termination codons. The eRF1-eRF3-GTP complex binds to a stop codon in the ribosomal A-site. ETF1/ERF1 is responsible for stop codon recognition and inducing hydrolysis of peptidyl-tRNA. Following GTP hydrolysis, eRF3 (GSPT1/ERF3A or GSPT2/ERF3B) dissociates, permitting ETF1/eRF1 to accommodate fully in the A-site, followed by hydrolysis of peptidyl-tRNA. Component of the transient SURF complex which recruits UPF1 to stalled ribosomes in the context of nonsense-mediated decay (NMD) of mRNAs containing premature stop codons. Required for SHFL-mediated translation termination which inhibits programmed ribosomal frameshifting (-1PRF) of mRNA from viruses and cellular genes. In Bos taurus (Bovine), this protein is Eukaryotic peptide chain release factor subunit 1 (ETF1).